We begin with the raw amino-acid sequence, 430 residues long: Adenylosuccinate synthetase (430 aa).

Residues 13–19 (GDEGKGK) and 41–43 (GHT) contribute to the GTP site. Residue Asp14 is the Proton acceptor of the active site. Residues Asp14 and Gly41 each coordinate Mg(2+). Residues 14-17 (DEGK), 39-42 (NAGH), Thr130, Arg144, Gln225, Thr240, and Arg304 contribute to the IMP site. Catalysis depends on His42, which acts as the Proton donor. 300 to 306 (ATTGRAR) lines the substrate pocket. GTP contacts are provided by residues Arg306, 332-334 (KLD), and 414-416 (STG).

The protein belongs to the adenylosuccinate synthetase family. In terms of assembly, homodimer. Mg(2+) serves as cofactor.

It localises to the cytoplasm. It carries out the reaction IMP + L-aspartate + GTP = N(6)-(1,2-dicarboxyethyl)-AMP + GDP + phosphate + 2 H(+). The protein operates within purine metabolism; AMP biosynthesis via de novo pathway; AMP from IMP: step 1/2. Functionally, plays an important role in the de novo pathway of purine nucleotide biosynthesis. Catalyzes the first committed step in the biosynthesis of AMP from IMP. This chain is Adenylosuccinate synthetase, found in Pseudomonas syringae pv. tomato (strain ATCC BAA-871 / DC3000).